The following is a 532-amino-acid chain: Light-independent protochlorophyllide reductase subunit B (532 aa).

D36 serves as a coordination point for [4Fe-4S] cluster. The Proton donor role is filled by D318. 453–454 (GM) contacts substrate.

Belongs to the ChlB/BchB/BchZ family. In terms of assembly, protochlorophyllide reductase is composed of three subunits; ChlL, ChlN and ChlB. Forms a heterotetramer of two ChlB and two ChlN subunits. [4Fe-4S] cluster is required as a cofactor.

It is found in the plastid. It localises to the chloroplast. The catalysed reaction is chlorophyllide a + oxidized 2[4Fe-4S]-[ferredoxin] + 2 ADP + 2 phosphate = protochlorophyllide a + reduced 2[4Fe-4S]-[ferredoxin] + 2 ATP + 2 H2O. It functions in the pathway porphyrin-containing compound metabolism; chlorophyll biosynthesis (light-independent). Component of the dark-operative protochlorophyllide reductase (DPOR) that uses Mg-ATP and reduced ferredoxin to reduce ring D of protochlorophyllide (Pchlide) to form chlorophyllide a (Chlide). This reaction is light-independent. The NB-protein (ChlN-ChlB) is the catalytic component of the complex. In Tetradesmus obliquus (Green alga), this protein is Light-independent protochlorophyllide reductase subunit B.